The chain runs to 149 residues: 3-dehydroquinate dehydratase (149 aa).

Tyrosine 26 acts as the Proton acceptor in catalysis. Asparagine 78, histidine 84, and aspartate 91 together coordinate substrate. Histidine 104 acts as the Proton donor in catalysis. Substrate-binding positions include 105–106 and arginine 115; that span reads IS.

The protein belongs to the type-II 3-dehydroquinase family. As to quaternary structure, homododecamer.

The catalysed reaction is 3-dehydroquinate = 3-dehydroshikimate + H2O. It participates in metabolic intermediate biosynthesis; chorismate biosynthesis; chorismate from D-erythrose 4-phosphate and phosphoenolpyruvate: step 3/7. In terms of biological role, catalyzes a trans-dehydration via an enolate intermediate. This chain is 3-dehydroquinate dehydratase (aroQ), found in Buchnera aphidicola subsp. Schizaphis graminum (strain Sg).